Here is an 89-residue protein sequence, read N- to C-terminus: Small ribosomal subunit protein uS17 (89 aa).

Belongs to the universal ribosomal protein uS17 family. In terms of assembly, part of the 30S ribosomal subunit.

Functionally, one of the primary rRNA binding proteins, it binds specifically to the 5'-end of 16S ribosomal RNA. This chain is Small ribosomal subunit protein uS17, found in Baumannia cicadellinicola subsp. Homalodisca coagulata.